We begin with the raw amino-acid sequence, 401 residues long: MEKKKVVLAYSGGLDTSVAIKWLQEKNYDIIALCLDLGEGKDLAFVKEKALSVGAIKSYMIDVQEEFANEYALMAMQAHTLYEGKYPLVSALSRPLIAKKLVEIAEQEGATAVAHGCTGKGNDQVRFEVSIQALNPYLEVIAPVREWKWSREEEIAYAKENNVPIPINLDSPFSIDQNLWGRSNECGILEDPWAAPPEDAYEMTLALEDTPNKPEFVEIGFEAGVPTTLNGTAYPLSELIKTLNALAGKHGVGRIDHVENRLVGIKSREVYECPAAMTLITAHKELEDLTLVKEVAHFKPMIEQKITELIYNGLWFSPLKQALNAFLQETQKNVTGTVRVKLFKGHAIVEGRKSEYSLYDEKLATYTAQDEFNHDAAVGFISLFGLPTKVYSQVNQKKVEA.

Residue 9-17 (AYSGGLDTS) coordinates ATP. Tyr86 is an L-citrulline binding site. Residue Gly116 coordinates ATP. Thr118, Asn122, and Asp123 together coordinate L-aspartate. Asn122 is an L-citrulline binding site. The L-citrulline site is built by Arg126, Ser174, Ser183, Glu259, and Tyr271.

This sequence belongs to the argininosuccinate synthase family. Type 1 subfamily. Homotetramer.

It is found in the cytoplasm. The catalysed reaction is L-citrulline + L-aspartate + ATP = 2-(N(omega)-L-arginino)succinate + AMP + diphosphate + H(+). The protein operates within amino-acid biosynthesis; L-arginine biosynthesis; L-arginine from L-ornithine and carbamoyl phosphate: step 2/3. The polypeptide is Argininosuccinate synthase (Bacillus thuringiensis (strain Al Hakam)).